A 256-amino-acid chain; its full sequence is Protein FixA (256 aa).

This sequence belongs to the ETF beta-subunit/FixA family. Heterodimer of FixA and FixB.

Its pathway is amine and polyamine metabolism; carnitine metabolism. Its function is as follows. Required for anaerobic carnitine reduction. May bring reductant to CaiA. The protein is Protein FixA of Escherichia fergusonii (strain ATCC 35469 / DSM 13698 / CCUG 18766 / IAM 14443 / JCM 21226 / LMG 7866 / NBRC 102419 / NCTC 12128 / CDC 0568-73).